The primary structure comprises 417 residues: MRVVILGSGVVGVSTAWYLAQAGHDVTVIDRQPEPALETSAGNAGQISPGYAAPWAAPGIPLKAIKWMFQRHAPLAIRPDFTTAQLCWMWQMLLNCDARHYKTNKARMVRLAEYSRDCLQQLRRDTGIQYEGRQGGTLQLFRTEQQYDNATRDIAVLEEAGVPYQLLARHELASVEPALANIVGTLTGGLRLPHDETGDCQLFTRQLAAMAAEAGVTFKLGRNVRQLRVEGQSVTGVQCDDEMIVADAYVMACGSYSTGLLRQWFDIPVYPLKGYSLTIPLADDASAPVSTVLDETYKVAITRFDNRIRVGGMAEVVGFNTDLNPKRRETLEMVVRDLYPHCGPIEQATFWTGLRPMTPDGTPLVGRSPLKNLYLNTGHGTLGWTMACGSGKLLADILSDKSPEIEADDLSVSRYTR.

Residue 3-17 (VVILGSGVVGVSTAW) coordinates FAD.

The protein belongs to the DadA oxidoreductase family. It depends on FAD as a cofactor.

It catalyses the reaction a D-alpha-amino acid + A + H2O = a 2-oxocarboxylate + AH2 + NH4(+). The protein operates within amino-acid degradation; D-alanine degradation; NH(3) and pyruvate from D-alanine: step 1/1. Its function is as follows. Oxidative deamination of D-amino acids. The polypeptide is D-amino acid dehydrogenase (Pectobacterium atrosepticum (strain SCRI 1043 / ATCC BAA-672) (Erwinia carotovora subsp. atroseptica)).